Reading from the N-terminus, the 207-residue chain is PITH domain-containing protein P35G2.02 (207 aa).

The PITH domain occupies 13–189 (EHPFESGPND…PVVTIYEATP (177 aa)).

This sequence belongs to the PITHD1 family.

Its subcellular location is the cytoplasm. The protein resides in the nucleus. This Schizosaccharomyces pombe (strain 972 / ATCC 24843) (Fission yeast) protein is PITH domain-containing protein P35G2.02.